Consider the following 155-residue polypeptide: uncharacterized protein (155 aa).

Residues Ser-135–Val-155 form a disordered region.

This is an uncharacterized protein from Acidianus convivator (ATV).